An 81-amino-acid chain; its full sequence is Dermaseptin-S6 (81 aa).

An N-terminal signal peptide occupies residues 1–22; that stretch reads MDILKKSLFFILFLGLVSLSIS. Residues 22 to 49 form a disordered region; sequence SEEEKRENEDEEDQEDDEQSEEKRGLWS. A propeptide spanning residues 23–45 is cleaved from the precursor; sequence EEEKRENEDEEDQEDDEQSEEKR. Acidic residues predominate over residues 30-41; sequence EDEEDQEDDEQS. Ile78 bears the Isoleucine amide mark. The propeptide occupies 80–81; it reads EQ.

This sequence belongs to the frog skin active peptide (FSAP) family. Dermaseptin subfamily. In terms of tissue distribution, expressed by the skin glands.

Its subcellular location is the secreted. Antimicrobial peptide. This is Dermaseptin-S6 from Phyllomedusa sauvagei (Sauvage's leaf frog).